The primary structure comprises 113 residues: Stigma/stylar cysteine-rich adhesin (113 aa).

An N-terminal signal peptide occupies residues 1 to 22; it reads MARSSAVCFLLLLAFLIGTASA. 4 cysteine pairs are disulfide-bonded: Cys25-Cys72, Cys35-Cys49, Cys50-Cys95, and Cys70-Cys109.

The protein belongs to the plant LTP family. In terms of tissue distribution, highly expressed in style and stigma, abundant in young leaves and petals, and low expression in young anthers at pollen mother cell stage with an active tapetum. Not expressed in mature leaves or in pollen grains or tubes. Found in the stylar transmitting tract epidermis and in the stylar extracellular matrix.

Functionally, acts as an adhesive agent between the pollen tube wall and the stylar transmitting tract epidermis. Binds a stylar pectin in a pH-dependent manner. Enhances activity of chemocyanin, a diffusible chemotropic factor. The polypeptide is Stigma/stylar cysteine-rich adhesin (SCA) (Lilium longiflorum (Trumpet lily)).